A 463-amino-acid polypeptide reads, in one-letter code: General transcription factor IIH subunit 4 (463 aa).

Belongs to the TFB2 family. As to quaternary structure, component of the 7-subunit TFIIH core complex composed of XPB/ERCC3, XPD/ERCC2, GTF2H1, GTF2H2, GTF2H3, GTF2H4 and GTF2H5, which is active in NER. The core complex associates with the 3-subunit CDK-activating kinase (CAK) module composed of CCNH/cyclin H, CDK7 and MNAT1 to form the 10-subunit holoenzyme (holo-TFIIH) active in transcription. Part of TBP-based Pol II pre-initiation complex (PIC), in which Pol II core assembles with general transcription factors and other specific initiation factors including GTF2E1, GTF2E2, GTF2F1, GTF2F2, TCEA1, ERCC2, ERCC3, GTF2H2, GTF2H3, GTF2H4, GTF2H5, GTF2A1, GTF2A2, GTF2B and TBP; this large multi-subunit PIC complex mediates DNA unwinding and targets Pol II core to the transcription start site where the first phosphodiester bond forms.

Its subcellular location is the nucleus. Functionally, component of the general transcription and DNA repair factor IIH (TFIIH) core complex, which is involved in general and transcription-coupled nucleotide excision repair (NER) of damaged DNA and, when complexed to CAK, in RNA transcription by RNA polymerase II. In NER, TFIIH acts by opening DNA around the lesion to allow the excision of the damaged oligonucleotide and its replacement by a new DNA fragment. In transcription, TFIIH has an essential role in transcription initiation. When the pre-initiation complex (PIC) has been established, TFIIH is required for promoter opening and promoter escape. Phosphorylation of the C-terminal tail (CTD) of the largest subunit of RNA polymerase II by the kinase module CAK controls the initiation of transcription. The sequence is that of General transcription factor IIH subunit 4 (Gtf2h4) from Mus musculus (Mouse).